We begin with the raw amino-acid sequence, 663 residues long: Transketolase 2 (663 aa).

Residue H25 coordinates substrate. Thiamine diphosphate contacts are provided by residues H65 and 113–115; that span reads GPL. Residue D154 coordinates Mg(2+). Residues G155 and N184 each coordinate thiamine diphosphate. Mg(2+) contacts are provided by N184 and I186. Residues H259, R356, and S383 each contribute to the substrate site. H259 contacts thiamine diphosphate. E410 acts as the Proton donor in catalysis. A thiamine diphosphate-binding site is contributed by F436. H460, D468, and R519 together coordinate substrate.

Belongs to the transketolase family. Homodimer. Requires Mg(2+) as cofactor. Ca(2+) is required as a cofactor. Mn(2+) serves as cofactor. The cofactor is Co(2+). It depends on thiamine diphosphate as a cofactor.

It carries out the reaction D-sedoheptulose 7-phosphate + D-glyceraldehyde 3-phosphate = aldehydo-D-ribose 5-phosphate + D-xylulose 5-phosphate. Catalyzes the transfer of a two-carbon ketol group from a ketose donor to an aldose acceptor, via a covalent intermediate with the cofactor thiamine pyrophosphate. This is Transketolase 2 (tkt2) from Aliivibrio fischeri (strain ATCC 700601 / ES114) (Vibrio fischeri).